A 276-amino-acid chain; its full sequence is Large ribosomal subunit protein uL2 (276 aa).

The disordered stretch occupies residues 212-276 (NRHRGIRPQT…KLIISRKKHK (65 aa)). The span at 257–276 (YKTRKKKASDKLIISRKKHK) shows a compositional bias: basic residues.

It belongs to the universal ribosomal protein uL2 family. In terms of assembly, part of the 50S ribosomal subunit. Forms a bridge to the 30S subunit in the 70S ribosome.

Its function is as follows. One of the primary rRNA binding proteins. Required for association of the 30S and 50S subunits to form the 70S ribosome, for tRNA binding and peptide bond formation. It has been suggested to have peptidyltransferase activity; this is somewhat controversial. Makes several contacts with the 16S rRNA in the 70S ribosome. The sequence is that of Large ribosomal subunit protein uL2 from Helicobacter pylori (strain HPAG1).